We begin with the raw amino-acid sequence, 156 residues long: Small ribosomal subunit protein uS7 (156 aa).

It belongs to the universal ribosomal protein uS7 family. In terms of assembly, part of the 30S ribosomal subunit. Contacts proteins S9 and S11.

One of the primary rRNA binding proteins, it binds directly to 16S rRNA where it nucleates assembly of the head domain of the 30S subunit. Is located at the subunit interface close to the decoding center, probably blocks exit of the E-site tRNA. This is Small ribosomal subunit protein uS7 from Salmonella agona (strain SL483).